Consider the following 278-residue polypeptide: MSRTNFDTLLEAGCHFGHLKRKWNPAMAPYIFMERNGIHIIDLHKTVAKVDEAAEALKQIAKSGKKVLFVATKKQAKQVVAEKAASVNMPYVIERWPGGMLTNFPTIRKAVKKMTTIDKLTADGTYSNLSKREILQISRQRAKLDKTLGSIADLTRLPSALFVIDVMKENIAVREANRLGIPVFGIVDTNSDPTNIDFVIPANDDATKSVEVILDACCAAMIEGLEERKAEKIDMEAAGEAPANKGKKKSAKARLDKSDEEAINAAKAAAFLKEDEEA.

The interval I233–S258 is disordered.

The protein belongs to the universal ribosomal protein uS2 family.

The protein is Small ribosomal subunit protein uS2 of Bacteroides fragilis (strain ATCC 25285 / DSM 2151 / CCUG 4856 / JCM 11019 / LMG 10263 / NCTC 9343 / Onslow / VPI 2553 / EN-2).